We begin with the raw amino-acid sequence, 529 residues long: Berberine bridge enzyme-like 7 (529 aa).

Residues 1 to 19 (MKEALSILCLALLVSVSEA) form the signal peptide. C32 and C95 are oxidised to a cystine. A glycan (N-linked (GlcNAc...) asparagine) is linked at N52. An FAD-binding PCMH-type domain is found at 69–247 (YSSPNFKKLL…LSWKINLVKV (179 aa)). Residues 110–172 (HDLEGLSYRS…QTLAFPAGVC (63 aa)) constitute a cross-link (6-(S-cysteinyl)-8alpha-(pros-histidyl)-FAD (His-Cys)). Residues N257, N341, and N439 are each glycosylated (N-linked (GlcNAc...) asparagine).

It belongs to the oxygen-dependent FAD-linked oxidoreductase family. Requires FAD as cofactor. In terms of processing, the FAD cofactor is bound via a bicovalent 6-S-cysteinyl, 8alpha-N1-histidyl FAD linkage.

It is found in the secreted. Its subcellular location is the cell wall. In terms of biological role, probable flavin-dependent oxidoreductase. The chain is Berberine bridge enzyme-like 7 from Arabidopsis thaliana (Mouse-ear cress).